Reading from the N-terminus, the 437-residue chain is Histidine--tRNA ligase (437 aa).

This sequence belongs to the class-II aminoacyl-tRNA synthetase family. As to quaternary structure, homodimer.

The protein resides in the cytoplasm. It catalyses the reaction tRNA(His) + L-histidine + ATP = L-histidyl-tRNA(His) + AMP + diphosphate + H(+). The protein is Histidine--tRNA ligase of Opitutus terrae (strain DSM 11246 / JCM 15787 / PB90-1).